The following is a 459-amino-acid chain: Cysteine--tRNA ligase (459 aa).

Cys-28 lines the Zn(2+) pocket. The short motif at 30–40 (MTVYDFCHLGH) is the 'HIGH' region element. The Zn(2+) site is built by Cys-209, His-234, and Glu-238. Positions 266–270 (KMAKS) match the 'KMSKS' region motif. Position 269 (Lys-269) interacts with ATP. The segment at 440–459 (QARGIELEDTPEGTKWRRTR) is disordered.

Belongs to the class-I aminoacyl-tRNA synthetase family. In terms of assembly, monomer. Requires Zn(2+) as cofactor.

The protein resides in the cytoplasm. The catalysed reaction is tRNA(Cys) + L-cysteine + ATP = L-cysteinyl-tRNA(Cys) + AMP + diphosphate. The polypeptide is Cysteine--tRNA ligase (Halorhodospira halophila (strain DSM 244 / SL1) (Ectothiorhodospira halophila (strain DSM 244 / SL1))).